The following is a 518-amino-acid chain: Integrator complex subunit 14 (518 aa).

A VWFA domain is found at 2 to 204 (PTVVVMDVSL…KNVQSMFGKL (203 aa)). Mg(2+)-binding residues include S10, S12, and T86. Position 418 is an N6-acetyllysine (K418).

This sequence belongs to the Integrator subunit 14 family. Component of the Integrator complex, composed of core subunits INTS1, INTS2, INTS3, INTS4, INTS5, INTS6, INTS7, INTS8, INTS9/RC74, INTS10, INTS11/CPSF3L, INTS12, INTS13, INTS14 and INTS15. The core complex associates with protein phosphatase 2A subunits PPP2CA and PPP2R1A, to form the Integrator-PP2A (INTAC) complex. INTS14 is part of the tail subcomplex, composed of INTS10, INTS13, INTS14 and INTS15. As to expression, strongly expressed in numerous cancer cells compared with their non-cancerous counterparts (lung, prostate, colon, stomach and skin).

Its subcellular location is the nucleus. In terms of biological role, component of the integrator complex, a multiprotein complex that terminates RNA polymerase II (Pol II) transcription in the promoter-proximal region of genes. The integrator complex provides a quality checkpoint during transcription elongation by driving premature transcription termination of transcripts that are unfavorably configured for transcriptional elongation: the complex terminates transcription by (1) catalyzing dephosphorylation of the C-terminal domain (CTD) of Pol II subunit POLR2A/RPB1 and SUPT5H/SPT5, (2) degrading the exiting nascent RNA transcript via endonuclease activity and (3) promoting the release of Pol II from bound DNA. The integrator complex is also involved in terminating the synthesis of non-coding Pol II transcripts, such as enhancer RNAs (eRNAs), small nuclear RNAs (snRNAs), telomerase RNAs and long non-coding RNAs (lncRNAs). Within the integrator complex, INTS14 is part of the integrator tail module that acts as a platform for the recruitment of transcription factors at promoters. This Homo sapiens (Human) protein is Integrator complex subunit 14.